We begin with the raw amino-acid sequence, 121 residues long: UPF0145 protein SAV_4658 (121 aa).

Belongs to the UPF0145 family.

This Streptomyces avermitilis (strain ATCC 31267 / DSM 46492 / JCM 5070 / NBRC 14893 / NCIMB 12804 / NRRL 8165 / MA-4680) protein is UPF0145 protein SAV_4658.